Here is a 436-residue protein sequence, read N- to C-terminus: Probable D-serine dehydratase (436 aa).

At K111 the chain carries N6-(pyridoxal phosphate)lysine.

This sequence belongs to the serine/threonine dehydratase family. DsdA subfamily. The cofactor is pyridoxal 5'-phosphate.

The catalysed reaction is D-serine = pyruvate + NH4(+). The protein is Probable D-serine dehydratase of Lactiplantibacillus plantarum (strain ATCC BAA-793 / NCIMB 8826 / WCFS1) (Lactobacillus plantarum).